The chain runs to 458 residues: ATP synthase subunit beta (458 aa).

148–155 (GGAGVGKT) lines the ATP pocket.

This sequence belongs to the ATPase alpha/beta chains family. F-type ATPases have 2 components, CF(1) - the catalytic core - and CF(0) - the membrane proton channel. CF(1) has five subunits: alpha(3), beta(3), gamma(1), delta(1), epsilon(1). CF(0) has three main subunits: a(1), b(2) and c(9-12). The alpha and beta chains form an alternating ring which encloses part of the gamma chain. CF(1) is attached to CF(0) by a central stalk formed by the gamma and epsilon chains, while a peripheral stalk is formed by the delta and b chains.

Its subcellular location is the cell inner membrane. The enzyme catalyses ATP + H2O + 4 H(+)(in) = ADP + phosphate + 5 H(+)(out). In terms of biological role, produces ATP from ADP in the presence of a proton gradient across the membrane. The catalytic sites are hosted primarily by the beta subunits. The chain is ATP synthase subunit beta from Pseudomonas putida (strain W619).